The following is a 280-amino-acid chain: Energy-coupling factor transporter ATP-binding protein EcfA2 (280 aa).

Positions 3–245 constitute an ABC transporter domain; sequence ISLENVSYTY…VAFLKEKQLG (243 aa). 40–47 serves as a coordination point for ATP; the sequence is GHTGSGKS.

The protein belongs to the ABC transporter superfamily. Energy-coupling factor EcfA family. In terms of assembly, forms a stable energy-coupling factor (ECF) transporter complex composed of 2 membrane-embedded substrate-binding proteins (S component), 2 ATP-binding proteins (A component) and 2 transmembrane proteins (T component).

Its subcellular location is the cell membrane. Its function is as follows. ATP-binding (A) component of a common energy-coupling factor (ECF) ABC-transporter complex. Unlike classic ABC transporters this ECF transporter provides the energy necessary to transport a number of different substrates. The protein is Energy-coupling factor transporter ATP-binding protein EcfA2 of Streptococcus thermophilus (strain CNRZ 1066).